Reading from the N-terminus, the 706-residue chain is MGGERQHYYGKHGTPQKYDPTFKGPIYHRGCTDVICCVFLLLAIVGYVAVGIIAWTHGDPRKVIYPTDSRGEFCGQKGTKNANKSYLFYFNIVKCASPLVLLEFQCPTPQICVEKCPNRYLTYLKAHGTQEFEYYKQFCVPGFKQNKAVTEVLRDGDCPAVLIPSKPLVQRCFPAIHAHKGVLMVGNETSYEDGHGFRKNITDLVEGAKKANGILEARHLAMRIFEDYTVSWYWIIIGLVIAMVLSLLFIILLRFLAGIMVWVMIVMVILVLGYGIFHCYMEYSRLRGEAGSDISLVDLGFQTDLRVYLHLRQTWMAFMIILSILEVIIILLLIFLRKRILIAIALIKEASRAVGYVMCSMLYPLVTFLLLCLCIAYWASTAIFLSTSNEAVYKIFSDTDCQAVGKTCNPENFSSSSEFHLCPGAHCQFAFYGGESTYHRALLGLQIFNAFMFFWLANFVLALGQVTLAGAFASYYWALKKPDDLPAFPLFSAFGRALRYHTGSLAFGSLLLAIVQIIRVMLEYLDQRLKAAENKFAKFLMTCLKCCFWCLEKFIKFLNRNAYIMIAIYGTNFCTSARNAFFLLMRNIIRVAVLDKVTDFLFLLGKLLIVGSVGILAFFFFTHRIRIVQDTAPPLNYYWVPILTVIVGSYLIAHGFFSVYGMCVDTLFLCFLEDLERNDGSMERPYFMSPTLKRLLNKTNRKPAES.

At 1–33 the chain is on the cytoplasmic side; the sequence is MGGERQHYYGKHGTPQKYDPTFKGPIYHRGCTD. At Thr14 the chain carries Phosphothreonine. Residues 34 to 54 traverse the membrane as a helical segment; that stretch reads VICCVFLLLAIVGYVAVGIIA. At 55–232 the chain is on the extracellular side; it reads WTHGDPRKVI…RIFEDYTVSW (178 aa). N-linked (GlcNAc...) asparagine glycosylation is found at Asn187 and Asn200. The chain crosses the membrane as a helical span at residues 233–253; that stretch reads YWIIIGLVIAMVLSLLFIILL. At 254 to 256 the chain is on the cytoplasmic side; sequence RFL. The chain crosses the membrane as a helical span at residues 257–277; sequence AGIMVWVMIVMVILVLGYGIF. Topologically, residues 278-315 are extracellular; sequence HCYMEYSRLRGEAGSDISLVDLGFQTDLRVYLHLRQTW. A helical membrane pass occupies residues 316–336; the sequence is MAFMIILSILEVIIILLLIFL. At 337–364 the chain is on the cytoplasmic side; sequence RKRILIAIALIKEASRAVGYVMCSMLYP. The chain crosses the membrane as a helical span at residues 365-385; that stretch reads LVTFLLLCLCIAYWASTAIFL. The Extracellular portion of the chain corresponds to 386–440; it reads STSNEAVYKIFSDTDCQAVGKTCNPENFSSSSEFHLCPGAHCQFAFYGGESTYHR. The helical transmembrane segment at 441-461 threads the bilayer; sequence ALLGLQIFNAFMFFWLANFVL. Residues 462-504 lie on the Cytoplasmic side of the membrane; it reads ALGQVTLAGAFASYYWALKKPDDLPAFPLFSAFGRALRYHTGS. The chain crosses the membrane as a helical span at residues 505-525; that stretch reads LAFGSLLLAIVQIIRVMLEYL. Topologically, residues 526–563 are extracellular; the sequence is DQRLKAAENKFAKFLMTCLKCCFWCLEKFIKFLNRNAY. A helical transmembrane segment spans residues 564–584; sequence IMIAIYGTNFCTSARNAFFLL. Residues 585 to 599 lie on the Cytoplasmic side of the membrane; it reads MRNIIRVAVLDKVTD. A helical membrane pass occupies residues 600–620; that stretch reads FLFLLGKLLIVGSVGILAFFF. The Extracellular portion of the chain corresponds to 621-638; that stretch reads FTHRIRIVQDTAPPLNYY. The chain crosses the membrane as a helical span at residues 639 to 659; it reads WVPILTVIVGSYLIAHGFFSV. The Cytoplasmic portion of the chain corresponds to 660 to 706; the sequence is YGMCVDTLFLCFLEDLERNDGSMERPYFMSPTLKRLLNKTNRKPAES.

This sequence belongs to the CTL (choline transporter-like) family. In terms of assembly, interacts with COCH. In terms of processing, N-glycosylated.

Its subcellular location is the cell membrane. The protein resides in the mitochondrion outer membrane. It carries out the reaction choline(out) + n H(+)(in) = choline(in) + n H(+)(out). The enzyme catalyses ethanolamine(out) + n H(+)(in) = ethanolamine(in) + n H(+)(out). Choline/H+ antiporter, mainly in mitochodria. Also acts as a low-affinity ethanolamine/H+ antiporter, regulating the supply of extracellular ethanolamine (Etn) for the CDP-Etn pathway, redistribute intracellular Etn and balance the CDP-Cho and CDP-Etn arms of the Kennedy pathway. The polypeptide is Choline transporter-like protein 2 (SLC44A2) (Sus scrofa (Pig)).